A 445-amino-acid polypeptide reads, in one-letter code: Probable glycine dehydrogenase (decarboxylating) subunit 1 (445 aa).

Belongs to the GcvP family. N-terminal subunit subfamily. The glycine cleavage system is composed of four proteins: P, T, L and H. In this organism, the P 'protein' is a heterodimer of two subunits.

The catalysed reaction is N(6)-[(R)-lipoyl]-L-lysyl-[glycine-cleavage complex H protein] + glycine + H(+) = N(6)-[(R)-S(8)-aminomethyldihydrolipoyl]-L-lysyl-[glycine-cleavage complex H protein] + CO2. The glycine cleavage system catalyzes the degradation of glycine. The P protein binds the alpha-amino group of glycine through its pyridoxal phosphate cofactor; CO(2) is released and the remaining methylamine moiety is then transferred to the lipoamide cofactor of the H protein. This Anaeromyxobacter sp. (strain Fw109-5) protein is Probable glycine dehydrogenase (decarboxylating) subunit 1.